The sequence spans 291 residues: Glycine--tRNA ligase alpha subunit (291 aa).

This sequence belongs to the class-II aminoacyl-tRNA synthetase family. Tetramer of two alpha and two beta subunits.

It is found in the cytoplasm. The catalysed reaction is tRNA(Gly) + glycine + ATP = glycyl-tRNA(Gly) + AMP + diphosphate. The sequence is that of Glycine--tRNA ligase alpha subunit from Microcystis aeruginosa (strain NIES-843 / IAM M-2473).